The following is a 493-amino-acid chain: UDP-N-acetylmuramoyl-L-alanyl-D-glutamate--2,6-diaminopimelate ligase (493 aa).

UDP-N-acetyl-alpha-D-muramoyl-L-alanyl-D-glutamate-binding residues include L30 and S32. Position 117–123 (117–123 (GTNGKTT)) interacts with ATP. UDP-N-acetyl-alpha-D-muramoyl-L-alanyl-D-glutamate-binding positions include N158, 159–160 (TT), S186, Q192, and R194. Position 226 is an N6-carboxylysine (K226). Meso-2,6-diaminopimelate is bound by residues R388, 412–415 (DNPR), G463, and E467. The Meso-diaminopimelate recognition motif signature appears at 412–415 (DNPR).

It belongs to the MurCDEF family. MurE subfamily. Mg(2+) serves as cofactor. Post-translationally, carboxylation is probably crucial for Mg(2+) binding and, consequently, for the gamma-phosphate positioning of ATP.

Its subcellular location is the cytoplasm. It carries out the reaction UDP-N-acetyl-alpha-D-muramoyl-L-alanyl-D-glutamate + meso-2,6-diaminopimelate + ATP = UDP-N-acetyl-alpha-D-muramoyl-L-alanyl-gamma-D-glutamyl-meso-2,6-diaminopimelate + ADP + phosphate + H(+). It functions in the pathway cell wall biogenesis; peptidoglycan biosynthesis. Its function is as follows. Catalyzes the addition of meso-diaminopimelic acid to the nucleotide precursor UDP-N-acetylmuramoyl-L-alanyl-D-glutamate (UMAG) in the biosynthesis of bacterial cell-wall peptidoglycan. The sequence is that of UDP-N-acetylmuramoyl-L-alanyl-D-glutamate--2,6-diaminopimelate ligase from Vibrio vulnificus (strain YJ016).